The sequence spans 68 residues: Large ribosomal subunit protein uL29 (68 aa).

Belongs to the universal ribosomal protein uL29 family.

The protein is Large ribosomal subunit protein uL29 of Streptococcus suis (strain 98HAH33).